Consider the following 160-residue polypeptide: Cytochrome b6-f complex subunit 4 (160 aa).

3 helical membrane passes run 36–56 (LLYV…GLAV), 95–115 (LLGI…PFIE), and 131–151 (TFFM…IFPI).

Belongs to the cytochrome b family. PetD subfamily. As to quaternary structure, the 4 large subunits of the cytochrome b6-f complex are cytochrome b6, subunit IV (17 kDa polypeptide, PetD), cytochrome f and the Rieske protein, while the 4 small subunits are PetG, PetL, PetM and PetN. The complex functions as a dimer.

It localises to the cellular thylakoid membrane. Its function is as follows. Component of the cytochrome b6-f complex, which mediates electron transfer between photosystem II (PSII) and photosystem I (PSI), cyclic electron flow around PSI, and state transitions. The protein is Cytochrome b6-f complex subunit 4 of Gloeothece citriformis (strain PCC 7424) (Cyanothece sp. (strain PCC 7424)).